The sequence spans 744 residues: Translation initiation factor IF-2, chloroplastic (744 aa).

Residues 113-146 (NSEGSFKSGKQKKKEKGKHKQNVNKDIHHTKNNR) are disordered. The segment covering 121 to 134 (GKQKKKEKGKHKQN) has biased composition (basic residues). The region spanning 244 to 417 (NRAPIVTILG…CSLAEFINLK (174 aa)) is the tr-type G domain. A G1 region spans residues 253–260 (GHVDHGKT). 253–260 (GHVDHGKT) serves as a coordination point for GTP. Residues 278–282 (GITQS) form a G2 region. The tract at residues 303–306 (DTPG) is G3. GTP contacts are provided by residues 303–307 (DTPGH) and 357–360 (NKID). The interval 357–360 (NKID) is G4. The tract at residues 393 to 395 (SAL) is G5.

It belongs to the TRAFAC class translation factor GTPase superfamily. Classic translation factor GTPase family. IF-2 subfamily.

It is found in the plastid. It localises to the chloroplast. One of the essential components for the initiation of protein synthesis. Protects formylmethionyl-tRNA from spontaneous hydrolysis and promotes its binding to the 30S ribosomal subunits. Also involved in the hydrolysis of GTP during the formation of the 70S ribosomal complex. The sequence is that of Translation initiation factor IF-2, chloroplastic (infB) from Gracilaria tenuistipitata var. liui (Red alga).